The following is a 465-amino-acid chain: ATP synthase subunit beta (465 aa).

149–156 provides a ligand contact to ATP; sequence GGAGVGKT.

It belongs to the ATPase alpha/beta chains family. In terms of assembly, F-type ATPases have 2 components, CF(1) - the catalytic core - and CF(0) - the membrane proton channel. CF(1) has five subunits: alpha(3), beta(3), gamma(1), delta(1), epsilon(1). CF(0) has three main subunits: a(1), b(2) and c(9-12). The alpha and beta chains form an alternating ring which encloses part of the gamma chain. CF(1) is attached to CF(0) by a central stalk formed by the gamma and epsilon chains, while a peripheral stalk is formed by the delta and b chains.

It is found in the cell inner membrane. The catalysed reaction is ATP + H2O + 4 H(+)(in) = ADP + phosphate + 5 H(+)(out). In terms of biological role, produces ATP from ADP in the presence of a proton gradient across the membrane. The catalytic sites are hosted primarily by the beta subunits. The protein is ATP synthase subunit beta of Dictyoglomus turgidum (strain DSM 6724 / Z-1310).